A 67-amino-acid chain; its full sequence is Large ribosomal subunit protein bL31 (67 aa).

Zn(2+) is bound by residues cysteine 16, cysteine 18, cysteine 36, and cysteine 39.

It belongs to the bacterial ribosomal protein bL31 family. Type A subfamily. Part of the 50S ribosomal subunit. Requires Zn(2+) as cofactor.

Functionally, binds the 23S rRNA. This is Large ribosomal subunit protein bL31 from Treponema denticola (strain ATCC 35405 / DSM 14222 / CIP 103919 / JCM 8153 / KCTC 15104).